The chain runs to 418 residues: UDP-N-acetylglucosamine 1-carboxyvinyltransferase (418 aa).

22-23 (KN) provides a ligand contact to phosphoenolpyruvate. Arg-93 is a UDP-N-acetyl-alpha-D-glucosamine binding site. Cys-117 acts as the Proton donor in catalysis. At Cys-117 the chain carries 2-(S-cysteinyl)pyruvic acid O-phosphothioketal. Asp-305 and Val-327 together coordinate UDP-N-acetyl-alpha-D-glucosamine.

This sequence belongs to the EPSP synthase family. MurA subfamily.

The protein resides in the cytoplasm. It carries out the reaction phosphoenolpyruvate + UDP-N-acetyl-alpha-D-glucosamine = UDP-N-acetyl-3-O-(1-carboxyvinyl)-alpha-D-glucosamine + phosphate. The protein operates within cell wall biogenesis; peptidoglycan biosynthesis. Cell wall formation. Adds enolpyruvyl to UDP-N-acetylglucosamine. The polypeptide is UDP-N-acetylglucosamine 1-carboxyvinyltransferase (Alkalilimnicola ehrlichii (strain ATCC BAA-1101 / DSM 17681 / MLHE-1)).